A 118-amino-acid chain; its full sequence is Large ribosomal subunit protein bL20 (118 aa).

The protein belongs to the bacterial ribosomal protein bL20 family.

Functionally, binds directly to 23S ribosomal RNA and is necessary for the in vitro assembly process of the 50S ribosomal subunit. It is not involved in the protein synthesizing functions of that subunit. In Edwardsiella ictaluri (strain 93-146), this protein is Large ribosomal subunit protein bL20.